The following is a 139-amino-acid chain: FAD synthase (139 aa).

Residues 9–10 (TF), 14–17 (HPGH), and Asp92 contribute to the ATP site.

It belongs to the archaeal FAD synthase family. Homodimer. A divalent metal cation is required as a cofactor.

It carries out the reaction FMN + ATP + H(+) = FAD + diphosphate. It functions in the pathway cofactor biosynthesis; FAD biosynthesis; FAD from FMN: step 1/1. Catalyzes the transfer of the AMP portion of ATP to flavin mononucleotide (FMN) to produce flavin adenine dinucleotide (FAD) coenzyme. The chain is FAD synthase from Methanosarcina barkeri (strain Fusaro / DSM 804).